Consider the following 231-residue polypeptide: uncharacterized protein (231 aa).

10-34 (VVTGAGSGIGEAIATLLHEEGAKVV) contacts NADP(+). Residue Ser-140 coordinates substrate. The active-site Proton acceptor is the Tyr-153.

The protein belongs to the short-chain dehydrogenases/reductases (SDR) family.

This is an uncharacterized protein from Staphylococcus aureus (strain N315).